A 161-amino-acid polypeptide reads, in one-letter code: MNLSDFKPGEGTEVPEEEKSVSVRTQTRRVALQALYQWQVNHSETVDIIKQFSEEGRLVDTDVALFQEIVNEVANHAADLDELYAPFLDRAVARIDPVEKNIMRMGVFELQNKLEIPYRVVINESVELAKRFGAEDSHKYINGILDKAAEGLRSLEKTQTD.

Residues 1 to 22 (MNLSDFKPGEGTEVPEEEKSVS) are disordered.

Belongs to the NusB family.

Its function is as follows. Involved in transcription antitermination. Required for transcription of ribosomal RNA (rRNA) genes. Binds specifically to the boxA antiterminator sequence of the ribosomal RNA (rrn) operons. In Hydrogenovibrio crunogenus (strain DSM 25203 / XCL-2) (Thiomicrospira crunogena), this protein is Transcription antitermination protein NusB.